The sequence spans 79 residues: Cell division protein ZapB (79 aa).

Positions 6–78 (FEKLEVKVQQ…LRALLGKMEE (73 aa)) form a coiled coil.

This sequence belongs to the ZapB family. In terms of assembly, homodimer. The ends of the coiled-coil dimer bind to each other, forming polymers. Interacts with FtsZ.

The protein resides in the cytoplasm. Non-essential, abundant cell division factor that is required for proper Z-ring formation. It is recruited early to the divisome by direct interaction with FtsZ, stimulating Z-ring assembly and thereby promoting cell division earlier in the cell cycle. Its recruitment to the Z-ring requires functional FtsA or ZipA. The polypeptide is Cell division protein ZapB (Yersinia enterocolitica serotype O:8 / biotype 1B (strain NCTC 13174 / 8081)).